We begin with the raw amino-acid sequence, 37 residues long: Large ribosomal subunit protein bL36 (37 aa).

This sequence belongs to the bacterial ribosomal protein bL36 family.

The sequence is that of Large ribosomal subunit protein bL36 from Shewanella frigidimarina (strain NCIMB 400).